Consider the following 51-residue polypeptide: Large ribosomal subunit protein eL39 (51 aa).

It belongs to the eukaryotic ribosomal protein eL39 family.

The sequence is that of Large ribosomal subunit protein eL39 from Picrophilus torridus (strain ATCC 700027 / DSM 9790 / JCM 10055 / NBRC 100828 / KAW 2/3).